Consider the following 549-residue polypeptide: Exodeoxyribonuclease 7 large subunit (549 aa).

Residues 511 to 549 (LVATDPPVDPKPTRKPVQKSSSPKPSSRKPKKSQQEDLF) are disordered.

It belongs to the XseA family. As to quaternary structure, heterooligomer composed of large and small subunits.

It is found in the cytoplasm. It catalyses the reaction Exonucleolytic cleavage in either 5'- to 3'- or 3'- to 5'-direction to yield nucleoside 5'-phosphates.. Its function is as follows. Bidirectionally degrades single-stranded DNA into large acid-insoluble oligonucleotides, which are then degraded further into small acid-soluble oligonucleotides. This Beijerinckia indica subsp. indica (strain ATCC 9039 / DSM 1715 / NCIMB 8712) protein is Exodeoxyribonuclease 7 large subunit.